Reading from the N-terminus, the 250-residue chain is uncharacterized protein (250 aa).

The N-terminal stretch at 1 to 25 (MKTLRTLCVLMILSGVIFFGLKIDA) is a signal peptide.

This is an uncharacterized protein from Bacillus subtilis (strain 168).